The primary structure comprises 349 residues: Cdc42 effector protein 4 (349 aa).

The residue at position 5 (Lys5) is an N6-methyllysine. Ser18 carries the post-translational modification Phosphoserine. Positions Ile27–Gly41 constitute a CRIB domain. 4 positions are modified to phosphoserine: Ser64, Ser103, Ser107, and Ser116. Residues Lys123–Lys132 are compositionally biased toward basic and acidic residues. Disordered regions lie at residues Lys123–Glu172, Gln220–Ser240, and Gly278–Val349. A phosphoserine mark is found at Ser136, Ser138, Ser140, Ser154, Ser165, Ser223, Ser285, and Ser288. Residues Ala280–Ser308 show a composition bias toward low complexity. Positions Leu311–Asp322 are enriched in basic and acidic residues. Residues Phe338–Val349 show a composition bias toward acidic residues.

Belongs to the BORG/CEP family. In terms of assembly, interacts with CDC42 and RHOQ, in a GTP-dependent manner. In terms of tissue distribution, ubiquitous.

It localises to the endomembrane system. It is found in the cytoplasm. The protein localises to the cytoskeleton. Its function is as follows. Probably involved in the organization of the actin cytoskeleton. May act downstream of CDC42 to induce actin filament assembly leading to cell shape changes. Induces pseudopodia formation, when overexpressed in fibroblasts. The chain is Cdc42 effector protein 4 (Cdc42ep4) from Mus musculus (Mouse).